We begin with the raw amino-acid sequence, 388 residues long: Pre-mRNA-splicing factor cwf2 (388 aa).

A disordered region spans residues 43 to 63 (VKRKKQPARKQIETRPEYEME). The C3H1-type zinc finger occupies 111-138 (NPGSFFCLYFARGMCSEGSKCEYLHRLP). The RRM domain occupies 174–248 (YTLYVGGITP…ECLNVRWATT (75 aa)). The tract at residues 331–352 (PNKSQSEEGSNDDHKSVTTTES) is disordered.

This sequence belongs to the RRM CWC2 family. In terms of assembly, belongs to the 40S cdc5-associated complex (or cwf complex), a spliceosome sub-complex reminiscent of a late-stage spliceosome composed of the U2, U5 and U6 snRNAs and at least brr2, cdc5, cwf2/prp3, cwf3/syf1, cwf4/syf3, cwf5/ecm2, spp42/cwf6, cwf7/spf27, cwf8, cwf9, cwf10, cwf11, cwf12, prp45/cwf13, cwf14, cwf15, cwf16, cwf17, cwf18, cwf19, cwf20, cwf21, cwf22, cwf23, cwf24, cwf25, cwf26, cyp7/cwf27, cwf28, cwf29/ist3, lea1, msl1, prp5/cwf1, prp10, prp12/sap130, prp17, prp22, sap61, sap62, sap114, sap145, slu7, smb1, smd1, smd3, smf1, smg1 and syf2.

Its subcellular location is the nucleus. Its function is as follows. Involved in the first step of pre-mRNA splicing. Required for cell growth and cell cycle control. Plays a role in the levels of the U1, U4, U5 and U6 snRNAs and the maintenance of the U4/U6 snRNA complex. May provide the link between the 'nineteen complex' NTC spliceosome protein complex and the spliceosome through the U6 snRNA. Associates predominantly with U6 snRNAs in assembled active spliceosomes. Binds directly to the internal stem-loop (ISL) domain of the U6 snRNA and to the pre-mRNA intron near the 5' splice site during the activation and catalytic phases of the spliceosome cycle. Involved in pre-mRNA splicing. This Schizosaccharomyces pombe (strain 972 / ATCC 24843) (Fission yeast) protein is Pre-mRNA-splicing factor cwf2 (cwf2).